The primary structure comprises 144 residues: Large ribosomal subunit protein uL15 (144 aa).

The tract at residues 1 to 52 is disordered; it reads MRLNTLSPAEGAKHAPKRVGRGIGSGLGKTGGRGHKGQKSRSGGGVRRGFEG. Positions 21–31 are enriched in gly residues; it reads RGIGSGLGKTG.

The protein belongs to the universal ribosomal protein uL15 family. Part of the 50S ribosomal subunit.

Its function is as follows. Binds to the 23S rRNA. The polypeptide is Large ribosomal subunit protein uL15 (Buchnera aphidicola subsp. Acyrthosiphon kondoi (Acyrthosiphon kondoi symbiotic bacterium)).